The sequence spans 303 residues: Acetaldehyde dehydrogenase (303 aa).

13 to 16 (SGNI) contributes to the NAD(+) binding site. The active-site Acyl-thioester intermediate is cysteine 128. Residues 159-167 (SAGPGTRQN) and asparagine 278 each bind NAD(+).

This sequence belongs to the acetaldehyde dehydrogenase family.

The catalysed reaction is acetaldehyde + NAD(+) + CoA = acetyl-CoA + NADH + H(+). This Chloroflexus aggregans (strain MD-66 / DSM 9485) protein is Acetaldehyde dehydrogenase.